A 159-amino-acid polypeptide reads, in one-letter code: Ribosomal RNA large subunit methyltransferase H (159 aa).

S-adenosyl-L-methionine is bound by residues L76, G108, and 127 to 132 (FSKMTF).

This sequence belongs to the RNA methyltransferase RlmH family. As to quaternary structure, homodimer.

It is found in the cytoplasm. The catalysed reaction is pseudouridine(1915) in 23S rRNA + S-adenosyl-L-methionine = N(3)-methylpseudouridine(1915) in 23S rRNA + S-adenosyl-L-homocysteine + H(+). Its function is as follows. Specifically methylates the pseudouridine at position 1915 (m3Psi1915) in 23S rRNA. The protein is Ribosomal RNA large subunit methyltransferase H of Staphylococcus aureus (strain Mu3 / ATCC 700698).